Reading from the N-terminus, the 157-residue chain is Phosphopantetheine adenylyltransferase (157 aa).

Substrate is bound at residue Ser-8. ATP is bound by residues 8–9 and His-16; that span reads SF. Substrate is bound by residues Lys-40, Thr-72, and Arg-86. Residues 87–89, Glu-97, and 122–128 each bind ATP; these read GLR and HSFLSSS.

This sequence belongs to the bacterial CoaD family. As to quaternary structure, homohexamer. Requires Mg(2+) as cofactor.

It is found in the cytoplasm. The enzyme catalyses (R)-4'-phosphopantetheine + ATP + H(+) = 3'-dephospho-CoA + diphosphate. Its pathway is cofactor biosynthesis; coenzyme A biosynthesis; CoA from (R)-pantothenate: step 4/5. Reversibly transfers an adenylyl group from ATP to 4'-phosphopantetheine, yielding dephospho-CoA (dPCoA) and pyrophosphate. In Prochlorococcus marinus (strain MIT 9303), this protein is Phosphopantetheine adenylyltransferase.